We begin with the raw amino-acid sequence, 315 residues long: O-antigen chain rhamnosyltransferase WbaN (315 aa).

The protein belongs to the glycosyltransferase 2 family.

The enzyme catalyses alpha-D-galactosyl-di-trans,octa-cis-undecaprenyl diphosphate + dTDP-beta-L-rhamnose = alpha-L-rhamnosyl-(1-&gt;3)-alpha-D-galactosyl-1-diphospho-di-trans,octa-cis-undecaprenol + dTDP + H(+). Its pathway is bacterial outer membrane biogenesis; LPS O-antigen biosynthesis. Functionally, rhamnosyltransferase involved in the biosynthesis of the repeat unit of the lipopolysaccharide (LPS) O-antigen region. Catalyzes the addition of a rhamnose to the galactosyl-undecaprenyl diphosphate intermediate. The sequence is that of O-antigen chain rhamnosyltransferase WbaN from Salmonella anatum.